Here is a 325-residue protein sequence, read N- to C-terminus: NADH-quinone oxidoreductase subunit H (325 aa).

The next 8 membrane-spanning stretches (helical) occupy residues 11–31 (ILLT…CGAF), 81–101 (VIFT…FAIV), 114–134 (IGIL…LFAG), 154–174 (LSYE…AGSF), 186–206 (VWNV…GVAV), 237–257 (FFVG…TLFF), 265–285 (LPPF…FILI), and 304–324 (ICLP…LWQA).

Belongs to the complex I subunit 1 family. As to quaternary structure, NDH-1 is composed of 13 different subunits. Subunits NuoA, H, J, K, L, M, N constitute the membrane sector of the complex.

It localises to the cell inner membrane. The catalysed reaction is a quinone + NADH + 5 H(+)(in) = a quinol + NAD(+) + 4 H(+)(out). NDH-1 shuttles electrons from NADH, via FMN and iron-sulfur (Fe-S) centers, to quinones in the respiratory chain. The immediate electron acceptor for the enzyme in this species is believed to be ubiquinone. Couples the redox reaction to proton translocation (for every two electrons transferred, four hydrogen ions are translocated across the cytoplasmic membrane), and thus conserves the redox energy in a proton gradient. This subunit may bind ubiquinone. The sequence is that of NADH-quinone oxidoreductase subunit H from Escherichia coli O139:H28 (strain E24377A / ETEC).